The sequence spans 194 residues: Ubiquitin-conjugating enzyme E2 T (194 aa).

Residues 2–152 (QRVSRLKREM…AKKWTAEHAI (151 aa)) enclose the UBC core domain. Cys86 functions as the Glycyl thioester intermediate in the catalytic mechanism. Basic and acidic residues-rich tracts occupy residues 158–170 (CVETDGKTPENKN) and 185–194 (NLEHTKKVCL). Positions 158-194 (CVETDGKTPENKNLKTSHKREALSAQENLEHTKKVCL) are disordered.

It belongs to the ubiquitin-conjugating enzyme family.

The protein localises to the nucleus. It carries out the reaction S-ubiquitinyl-[E1 ubiquitin-activating enzyme]-L-cysteine + [E2 ubiquitin-conjugating enzyme]-L-cysteine = [E1 ubiquitin-activating enzyme]-L-cysteine + S-ubiquitinyl-[E2 ubiquitin-conjugating enzyme]-L-cysteine.. Its pathway is protein modification; protein ubiquitination. Accepts ubiquitin from the E1 complex and catalyzes its covalent attachment to other proteins. Catalyzes monoubiquitination. Involved in DNA repair. The chain is Ubiquitin-conjugating enzyme E2 T (ube2t) from Danio rerio (Zebrafish).